Reading from the N-terminus, the 127-residue chain is Photosystem II reaction center Psb28 protein (127 aa).

The tract at residues 108-127 (LGYSQSQDSDQTEGADNQQA) is disordered. Polar residues predominate over residues 109–127 (GYSQSQDSDQTEGADNQQA).

It belongs to the Psb28 family. In terms of assembly, part of the photosystem II complex.

The protein localises to the cellular thylakoid membrane. This Synechococcus sp. (strain CC9605) protein is Photosystem II reaction center Psb28 protein.